A 208-amino-acid chain; its full sequence is Mediator of RNA polymerase II transcription subunit 18 (208 aa).

It belongs to the Mediator complex subunit 18 family. As to quaternary structure, component of the Mediator complex.

The protein localises to the nucleus. In terms of biological role, component of the Mediator complex, a coactivator involved in the regulated transcription of nearly all RNA polymerase II-dependent genes. Mediator functions as a bridge to convey information from gene-specific regulatory proteins to the basal RNA polymerase II transcription machinery. Mediator is recruited to promoters by direct interactions with regulatory proteins and serves as a scaffold for the assembly of a functional preinitiation complex with RNA polymerase II and the general transcription factors. This Danio rerio (Zebrafish) protein is Mediator of RNA polymerase II transcription subunit 18 (med18).